A 451-amino-acid chain; its full sequence is Kynureninase (451 aa).

Pyridoxal 5'-phosphate-binding positions include leucine 131, serine 132, 159–162 (FPSD), serine 215, aspartate 244, histidine 247, and tyrosine 269. Lysine 270 is subject to N6-(pyridoxal phosphate)lysine. Pyridoxal 5'-phosphate-binding residues include tryptophan 303 and asparagine 331.

It belongs to the kynureninase family. Homodimer. Pyridoxal 5'-phosphate is required as a cofactor.

The protein resides in the cytoplasm. The enzyme catalyses L-kynurenine + H2O = anthranilate + L-alanine + H(+). The catalysed reaction is 3-hydroxy-L-kynurenine + H2O = 3-hydroxyanthranilate + L-alanine + H(+). It functions in the pathway amino-acid degradation; L-kynurenine degradation; L-alanine and anthranilate from L-kynurenine: step 1/1. Its pathway is cofactor biosynthesis; NAD(+) biosynthesis; quinolinate from L-kynurenine: step 2/3. Functionally, catalyzes the cleavage of L-kynurenine (L-Kyn) and L-3-hydroxykynurenine (L-3OHKyn) into anthranilic acid (AA) and 3-hydroxyanthranilic acid (3-OHAA), respectively. In Dictyostelium discoideum (Social amoeba), this protein is Kynureninase.